A 389-amino-acid polypeptide reads, in one-letter code: Lipid-A-disaccharide synthase (389 aa).

This sequence belongs to the LpxB family.

The catalysed reaction is a lipid X + a UDP-2-N,3-O-bis[(3R)-3-hydroxyacyl]-alpha-D-glucosamine = a lipid A disaccharide + UDP + H(+). It functions in the pathway bacterial outer membrane biogenesis; LPS lipid A biosynthesis. In terms of biological role, condensation of UDP-2,3-diacylglucosamine and 2,3-diacylglucosamine-1-phosphate to form lipid A disaccharide, a precursor of lipid A, a phosphorylated glycolipid that anchors the lipopolysaccharide to the outer membrane of the cell. The chain is Lipid-A-disaccharide synthase from Burkholderia multivorans (strain ATCC 17616 / 249).